A 1561-amino-acid chain; its full sequence is Synemin (1561 aa).

The segment at 1 to 10 (MLSWRLQTGS) is head. Residues 11 to 49 (EKAELQELNARLYDYVCRVRELERENLLLEEELRSRLSR) form a coil 1A region. The segment at 11–320 (EKAELQELNA…YRALLEGESN (310 aa)) is interaction with DMD and UTRN. The IF rod domain maps to 11-322 (EKAELQELNA…ALLEGESNPE (312 aa)). Residues 50–58 (EDRWAEDQA) are linker 1. Positions 59–163 (LYAEEARSLR…DLRARAASLT (105 aa)) are coil 1B. The segment at 164 to 186 (MHFRARATSPAAPPPRLRDVHDS) is linker 12. Residues 187-300 (YALLVAESWR…LRDYQELLQV (114 aa)) form a coil 2 region. The tail stretch occupies residues 301-1561 (KTGLSLEVAT…EEEEEGEGWF (1261 aa)). Composition is skewed to polar residues over residues 371-390 (SSAS…TTAV) and 401-421 (SRHS…KTIS). Disordered stretches follow at residues 371-421 (SSAS…KTIS), 549-574 (DARK…RSVK), and 591-637 (EVST…DSTT). The span at 601–624 (GRKDVSHSGGREAETKETRFRLDT) shows a compositional bias: basic and acidic residues. Residues 625-637 (QDTASSLQSDSTT) are compositionally biased toward polar residues. The residue at position 653 (Thr653) is a Phosphothreonine. Phosphoserine is present on residues Ser655, Ser778, Ser780, Ser1044, Ser1049, Ser1077, Ser1087, Ser1179, and Ser1182. Disordered stretches follow at residues 1033 to 1061 (SVVR…VPAG) and 1075 to 1099 (SPSG…QGPV). Residues 1086–1099 (VSPSSDQRVTQGPV) are compositionally biased toward polar residues. The interval 1152–1453 (VSGDFSEAVS…GPKETSFTFQ (302 aa)) is interaction with TLN1 and VCL. Residues 1212 to 1231 (ADISGSGRMPGSERSHTEKE) form a disordered region. Basic and acidic residues predominate over residues 1222–1231 (GSERSHTEKE). The tract at residues 1242–1557 (AQVGGNFATE…DNEEEEEEEG (316 aa)) is interaction with DMD and UTRN. Position 1425 is a phosphoserine (Ser1425). Arg1481 carries the omega-N-methylarginine modification. Residues 1491–1519 (DERVASTGSGASPGDAHQAPGEKGTEQAG) are disordered.

The protein belongs to the intermediate filament family. In terms of assembly, interacts with DES, DMD, DTNA, TLN1, UTRN and VCL. Isoform 1 and isoform 2 interact with GFAP and VIM. As to expression, isoform 2 and isoform 3 are detected in adult skeletal muscle, heart and bladder, whereas isoform 1 is only detected in adult bladder (at protein level).

It is found in the cytoplasm. Its subcellular location is the cytoskeleton. The protein resides in the cell junction. It localises to the adherens junction. Type-VI intermediate filament (IF) which plays an important cytoskeletal role within the muscle cell cytoskeleton. It forms heteromeric IFs with desmin and/or vimentin, and via its interaction with cytoskeletal proteins alpha-dystrobrevin, dystrophin, talin-1, utrophin and vinculin, is able to link these heteromeric IFs to adherens-type junctions, such as to the costameres, neuromuscular junctions, and myotendinous junctions within striated muscle cells. In Mus musculus (Mouse), this protein is Synemin.